The sequence spans 695 residues: Probable rhamnogalacturonate lyase C (695 aa).

An N-terminal signal peptide occupies residues 1–21 (MFLPSRKALAFLACLASHSVA). N-linked (GlcNAc...) asparagine glycosylation is found at N28, N96, N118, N144, N199, N285, N532, and N638.

It belongs to the polysaccharide lyase 4 family.

Its subcellular location is the secreted. The catalysed reaction is Endotype eliminative cleavage of L-alpha-rhamnopyranosyl-(1-&gt;4)-alpha-D-galactopyranosyluronic acid bonds of rhamnogalacturonan I domains in ramified hairy regions of pectin leaving L-rhamnopyranose at the reducing end and 4-deoxy-4,5-unsaturated D-galactopyranosyluronic acid at the non-reducing end.. In terms of biological role, pectinolytic enzymes consist of four classes of enzymes: pectin lyase, polygalacturonase, pectin methylesterase and rhamnogalacturonase. Degrades the rhamnogalacturonan I (RG-I) backbone of pectin. In Aspergillus oryzae (strain ATCC 42149 / RIB 40) (Yellow koji mold), this protein is Probable rhamnogalacturonate lyase C (rglC).